Here is a 445-residue protein sequence, read N- to C-terminus: Phosphoglucosamine mutase (445 aa).

Ser102 (phosphoserine intermediate) is an active-site residue. Mg(2+) contacts are provided by Ser102, Asp240, Asp242, and Asp244. Phosphoserine is present on Ser102.

It belongs to the phosphohexose mutase family. Mg(2+) serves as cofactor. Activated by phosphorylation.

It catalyses the reaction alpha-D-glucosamine 1-phosphate = D-glucosamine 6-phosphate. Its function is as follows. Catalyzes the conversion of glucosamine-6-phosphate to glucosamine-1-phosphate. The protein is Phosphoglucosamine mutase of Mycolicibacterium gilvum (strain PYR-GCK) (Mycobacterium gilvum (strain PYR-GCK)).